A 338-amino-acid polypeptide reads, in one-letter code: MTTTLVSATIFDLSEVLCKGNKMLNYSTPSAGGCLLDRKAVGTPAGGGFPRRHSVTLPSSKFHQNQLLSSLKGEPAPSLSSRDSRFRDRSFSEGGERLLPTQKQPGSGQVNSSRYKTELCRPFEENGACKYGDKCQFAHGIHELRSLTRHPKYKTELCRTFHTIGFCPYGPRCHFIHNAEERRALAGGRDLSADRPRLQHSFSFAGFPSAAATAAATGLLDSPTSITPPPILSADDLLGSPTLPDGTNNPFAFSSQELASLFAPSMGLPGGGSPTTFLFRPMSESPHMFDSPPSPQDSLSDHEGYLSSSSSSHSGSDSPTLDNSRRLPIFSRLSISDD.

Residues 1–111 (MTTTLVSATI…QKQPGSGQVN (111 aa)) form a necessary and sufficient for the association with mRNA decay enzymes and mRNA decay activation region. Ser-54 is modified (phosphoserine; by MAPKAPK2). The interval 71 to 113 (LKGEPAPSLSSRDSRFRDRSFSEGGERLLPTQKQPGSGQVNSS) is disordered. Residues 82–96 (RDSRFRDRSFSEGGE) are compositionally biased toward basic and acidic residues. Ser-90 bears the Phosphoserine; by PKB/AKT1 mark. Position 92 is a phosphoserine; by PKB/AKT1 and MAPKAPK2 (Ser-92). Over residues 101–113 (TQKQPGSGQVNSS) the composition is skewed to polar residues. 2 C3H1-type zinc fingers span residues 114–142 (RYKT…HGIH) and 152–180 (KYKT…HNAE). The necessary for mRNA decay activation stretch occupies residues 185 to 338 (LAGGRDLSAD…IFSRLSISDD (154 aa)). Ser-203 is modified (phosphoserine; by PKB/AKT1 and MAPKAPK2). Positions 273–338 (SPTTFLFRPM…IFSRLSISDD (66 aa)) are disordered. A compositionally biased stretch (low complexity) spans 305 to 318 (YLSSSSSSHSGSDS). Position 318 is a phosphoserine (Ser-318). A Phosphoserine; by RPS6KA1 modification is found at Ser-334.

Associates with the cytoplasmic CCR4-NOT deadenylase and RNA exosome complexes to trigger ARE-containing mRNA deadenylation and decay processes. Interacts with CNOT1. Interacts (via N-terminus) with CNOT6. Interacts with CNOT7; this interaction is inhibited in response to phorbol 12-myristate 13-acetate (PMA) treatment in a p38 MAPK-dependent manner. Interacts with DCP1A. Interacts (via N-terminus) with DCP2. Interacts (via N-terminus) with EXOSC2. Interacts with XRN1. Interacts (via phosphorylated form) with YWHAB; this interaction occurs in a protein kinase AKT1-dependent manner. Interacts (via phosphorylated form) with YWHAZ; this interaction occurs in a p38 MAPK- and AKT-signaling pathways. Phosphorylated. Phosphorylated by RPS6KA1 at Ser-334 upon phorbol 12-myristate 13-acetate (PMA) treatment; this phosphorylation results in dissociation of the CCR4-NOT deadenylase complex and induces p38 MAPK-mediated stabilization of the low-density lipoprotein receptor LDLR mRNA. Phosphorylated by protein kinase AKT1 at Ser-92 and Ser-203 in response to insulin; these phosphorylations stabilize ZFP36L1, increase the association with 14-3-3 proteins and mediate ARE-containing mRNA stabilization. AKT1-mediated phosphorylation at Ser-92 does not impair ARE-containing RNA-binding. Phosphorylated at Ser-54, Ser-92 and Ser-203 by MAPKAPK2; these phosphorylations increase the association with 14-3-3 proteins and mediate ARE-containing mRNA stabilization in a protein kinase AKT1-independent manner. MAPKAPK2-mediated phosphorylations at Ser-54, Ser-92 and Ser-203 do not impair ARE-containing RNA-binding. Phosphorylations increase the association with 14-3-3 proteins and mediate ARE-containing mRNA stabilization during early adipogenesis in a p38 MAPK- and AKT-dependent manner. Post-translationally, ubiquitinated. Ubiquitination leads to proteasomal degradation, a process inhibited by phosphorylations at Ser-90, Ser-92 and Ser-203. As to expression, expressed in preadipocytes and adipocytes. Expressed in the proximal and distal tubules in the renal cortex (at protein level). Expressed in ovary, heart, kidney, lung, spleen and thymus. Weakly expressed in brain, liver and testis. Expressed in osteoblasts. Expressed in embryonic stem cells (ESCs). Expressed through B lymphocyte development.

It is found in the nucleus. The protein localises to the cytoplasm. It localises to the cytoplasmic granule. The protein resides in the P-body. Its function is as follows. Zinc-finger RNA-binding protein that destabilizes several cytoplasmic AU-rich element (ARE)-containing mRNA transcripts by promoting their poly(A) tail removal or deadenylation, and hence provide a mechanism for attenuating protein synthesis. Acts as a 3'-untranslated region (UTR) ARE mRNA-binding adapter protein to communicate signaling events to the mRNA decay machinery. Functions by recruiting the CCR4-NOT deadenylating complex and components of the cytoplasmic RNA decay machinery to the bound ARE-containing mRNAs, and hence promotes ARE-mediated mRNA deadenylation and decay processes. Also induces the degradation of ARE-containing mRNAs even in absence of poly(A) tail. Binds to 3'-UTR ARE of numerous mRNAs. Positively regulates early adipogenesis by promoting ARE-mediated mRNA decay of immediate early genes (IEGs). Promotes ARE-mediated mRNA decay of mineralocorticoid receptor NR3C2 mRNA in response to hypertonic stress. Negatively regulates hematopoietic/erythroid cell differentiation by promoting ARE-mediated mRNA decay of the transcription factor STAT5B mRNA. Positively regulates monocyte/macrophage cell differentiation by promoting ARE-mediated mRNA decay of the cyclin-dependent kinase CDK6 mRNA. Promotes degradation of ARE-containing pluripotency-associated mRNAs in embryonic stem cells (ESCs), such as NANOG, through a fibroblast growth factor (FGF)-induced MAPK-dependent signaling pathway, and hence attenuates ESC self-renewal and positively regulates mesendoderm differentiation. May play a role in mediating pro-apoptotic effects in malignant B-cells by promoting ARE-mediated mRNA decay of BCL2 mRNA. In association with ZFP36L2 maintains quiescence on developing B lymphocytes by promoting ARE-mediated decay of several mRNAs encoding cell cycle regulators that help B cells progress through the cell cycle, and hence ensuring accurate variable-diversity-joining (VDJ) recombination and functional immune cell formation. Together with ZFP36L2 is also necessary for thymocyte development and prevention of T-cell acute lymphoblastic leukemia (T-ALL) transformation by promoting ARE-mediated mRNA decay of the oncogenic transcription factor NOTCH1 mRNA. Involved in the delivery of target ARE-mRNAs to processing bodies (PBs). In addition to its cytosolic mRNA-decay function, plays a role in the regulation of nuclear mRNA 3'-end processing; modulates mRNA 3'-end maturation efficiency of the DLL4 mRNA through binding with an ARE embedded in a weak noncanonical polyadenylation (poly(A)) signal in endothelial cells. Also involved in the regulation of stress granule (SG) and P-body (PB) formation and fusion. Plays a role in vasculogenesis and endocardial development. Involved in the regulation of keratinocyte proliferation, differentiation and apoptosis. Plays a role in myoblast cell differentiation. The polypeptide is mRNA decay activator protein ZFP36L1 (Mus musculus (Mouse)).